A 379-amino-acid polypeptide reads, in one-letter code: GTP cyclohydrolase 1 type 2 homolog (379 aa).

Residues histidine 64, histidine 65, aspartate 103, histidine 333, and glutamate 337 each contribute to the a divalent metal cation site.

It belongs to the GTP cyclohydrolase I type 2/NIF3 family. As to quaternary structure, homohexamer.

In Mycobacterium bovis (strain ATCC BAA-935 / AF2122/97), this protein is GTP cyclohydrolase 1 type 2 homolog.